Consider the following 213-residue polypeptide: Iron sulfur cluster assembly protein 1, mitochondrial (213 aa).

It belongs to the NifU family. Component of the core Fe-S cluster (ISC) assembly machinery. [2Fe-2S] cluster is required as a cofactor.

It localises to the mitochondrion matrix. It participates in cofactor biosynthesis; iron-sulfur cluster biosynthesis. In terms of biological role, scaffold protein for the de novo synthesis of iron-sulfur (Fe-S) clusters within mitochondria, which is required for maturation of both mitochondrial and cytoplasmic [2Fe-2S] and [4Fe-4S] proteins. First, a [2Fe-2S] cluster is transiently assembled on the scaffold protein ISU1. In a second step, the cluster is released from ISU1, transferred to a glutaredoxin, followed by the formation of mitochondrial [2Fe-2S] proteins, the synthesis of [4Fe-4S] clusters and their target-specific insertion into the recipient apoproteins. Cluster assembly on ISU1 depends on the function of the cysteine desulfurase complex NFS1-ISD11, which serves as the sulfur donor for cluster synthesis, the iron-binding protein frataxin as the putative iron donor, and the electron transfer chain comprised of ferredoxin reductase and ferredoxin, which receive their electrons from NADH. This Candida glabrata (strain ATCC 2001 / BCRC 20586 / JCM 3761 / NBRC 0622 / NRRL Y-65 / CBS 138) (Yeast) protein is Iron sulfur cluster assembly protein 1, mitochondrial (ISU1).